The chain runs to 454 residues: Bifunctional protein GlmU (454 aa).

The tract at residues 1–226 is pyrophosphorylase; it reads MSLNVVILAA…AIEVEGANNR (226 aa). Residues 8-11, lysine 22, glutamine 73, 78-79, 100-102, glycine 137, glutamate 151, asparagine 166, and asparagine 224 each bind UDP-N-acetyl-alpha-D-glucosamine; these read LAAG, GT, and YGD. Residue aspartate 102 participates in Mg(2+) binding. A Mg(2+)-binding site is contributed by asparagine 224. The interval 227-247 is linker; that stretch reads VQLAQLERAYQARAAEKMMLE. The interval 248–454 is N-acetyltransferase; that stretch reads GANLRDPARI…GWQRPIKIKK (207 aa). UDP-N-acetyl-alpha-D-glucosamine is bound by residues arginine 330 and lysine 348. Residue histidine 360 is the Proton acceptor of the active site. UDP-N-acetyl-alpha-D-glucosamine contacts are provided by tyrosine 363 and asparagine 374. Acetyl-CoA contacts are provided by residues alanine 377, 383–384, serine 402, alanine 420, and arginine 437; that span reads NY.

It in the N-terminal section; belongs to the N-acetylglucosamine-1-phosphate uridyltransferase family. In the C-terminal section; belongs to the transferase hexapeptide repeat family. As to quaternary structure, homotrimer. Mg(2+) is required as a cofactor.

The protein localises to the cytoplasm. The enzyme catalyses alpha-D-glucosamine 1-phosphate + acetyl-CoA = N-acetyl-alpha-D-glucosamine 1-phosphate + CoA + H(+). It carries out the reaction N-acetyl-alpha-D-glucosamine 1-phosphate + UTP + H(+) = UDP-N-acetyl-alpha-D-glucosamine + diphosphate. Its pathway is nucleotide-sugar biosynthesis; UDP-N-acetyl-alpha-D-glucosamine biosynthesis; N-acetyl-alpha-D-glucosamine 1-phosphate from alpha-D-glucosamine 6-phosphate (route II): step 2/2. It functions in the pathway nucleotide-sugar biosynthesis; UDP-N-acetyl-alpha-D-glucosamine biosynthesis; UDP-N-acetyl-alpha-D-glucosamine from N-acetyl-alpha-D-glucosamine 1-phosphate: step 1/1. It participates in bacterial outer membrane biogenesis; LPS lipid A biosynthesis. In terms of biological role, catalyzes the last two sequential reactions in the de novo biosynthetic pathway for UDP-N-acetylglucosamine (UDP-GlcNAc). The C-terminal domain catalyzes the transfer of acetyl group from acetyl coenzyme A to glucosamine-1-phosphate (GlcN-1-P) to produce N-acetylglucosamine-1-phosphate (GlcNAc-1-P), which is converted into UDP-GlcNAc by the transfer of uridine 5-monophosphate (from uridine 5-triphosphate), a reaction catalyzed by the N-terminal domain. The polypeptide is Bifunctional protein GlmU (Shewanella frigidimarina (strain NCIMB 400)).